A 282-amino-acid chain; its full sequence is Pyrroline-5-carboxylate reductase (282 aa).

This sequence belongs to the pyrroline-5-carboxylate reductase family.

The enzyme catalyses L-proline + NADP(+) = (S)-1-pyrroline-5-carboxylate + NADPH + 2 H(+). The catalysed reaction is L-proline + NAD(+) = (S)-1-pyrroline-5-carboxylate + NADH + 2 H(+). Its pathway is amino-acid biosynthesis; L-proline biosynthesis; L-proline from L-glutamate 5-semialdehyde: step 1/1. The polypeptide is Pyrroline-5-carboxylate reductase (pro3) (Schizosaccharomyces pombe (strain 972 / ATCC 24843) (Fission yeast)).